Consider the following 101-residue polypeptide: Biogenesis of lysosome-related organelles complex 1 subunit SNN1 (101 aa).

Residues 62 to 100 (DSNEYKAQFKEVNNLQKRLQKITLRLKDLERRSSQLTTS) are a coiled coil.

It belongs to the SNAPIN family. In terms of assembly, component of the biogenesis of lysosome-related organelles complex-1 (BLOC-1).

Its subcellular location is the endosome. Component of the biogenesis of lysosome-related organelles complex-1 (BLOC-1), a complex involved in endosomal cargo sorting. The chain is Biogenesis of lysosome-related organelles complex 1 subunit SNN1 (SNN1) from Candida glabrata (strain ATCC 2001 / BCRC 20586 / JCM 3761 / NBRC 0622 / NRRL Y-65 / CBS 138) (Yeast).